A 509-amino-acid polypeptide reads, in one-letter code: ATP synthase subunit alpha (509 aa).

169 to 176 (GDRQTGKT) provides a ligand contact to ATP.

The protein belongs to the ATPase alpha/beta chains family. In terms of assembly, F-type ATPases have 2 components, CF(1) - the catalytic core - and CF(0) - the membrane proton channel. CF(1) has five subunits: alpha(3), beta(3), gamma(1), delta(1), epsilon(1). CF(0) has three main subunits: a(1), b(2) and c(9-12). The alpha and beta chains form an alternating ring which encloses part of the gamma chain. CF(1) is attached to CF(0) by a central stalk formed by the gamma and epsilon chains, while a peripheral stalk is formed by the delta and b chains.

The protein resides in the cell inner membrane. The enzyme catalyses ATP + H2O + 4 H(+)(in) = ADP + phosphate + 5 H(+)(out). Its function is as follows. Produces ATP from ADP in the presence of a proton gradient across the membrane. The alpha chain is a regulatory subunit. The protein is ATP synthase subunit alpha of Novosphingobium aromaticivorans (strain ATCC 700278 / DSM 12444 / CCUG 56034 / CIP 105152 / NBRC 16084 / F199).